Consider the following 94-residue polypeptide: Pyrimidine/purine nucleoside phosphorylase (94 aa).

The protein belongs to the nucleoside phosphorylase PpnP family.

It carries out the reaction a purine D-ribonucleoside + phosphate = a purine nucleobase + alpha-D-ribose 1-phosphate. It catalyses the reaction adenosine + phosphate = alpha-D-ribose 1-phosphate + adenine. The catalysed reaction is cytidine + phosphate = cytosine + alpha-D-ribose 1-phosphate. The enzyme catalyses guanosine + phosphate = alpha-D-ribose 1-phosphate + guanine. It carries out the reaction inosine + phosphate = alpha-D-ribose 1-phosphate + hypoxanthine. It catalyses the reaction thymidine + phosphate = 2-deoxy-alpha-D-ribose 1-phosphate + thymine. The catalysed reaction is uridine + phosphate = alpha-D-ribose 1-phosphate + uracil. The enzyme catalyses xanthosine + phosphate = alpha-D-ribose 1-phosphate + xanthine. In terms of biological role, catalyzes the phosphorolysis of diverse nucleosides, yielding D-ribose 1-phosphate and the respective free bases. Can use uridine, adenosine, guanosine, cytidine, thymidine, inosine and xanthosine as substrates. Also catalyzes the reverse reactions. The protein is Pyrimidine/purine nucleoside phosphorylase of Pseudomonas fluorescens (strain Pf0-1).